A 461-amino-acid polypeptide reads, in one-letter code: Photosystem II CP43 reaction center protein (461 aa).

A propeptide spanning residues 1 to 2 (ME) is cleaved from the precursor. T3 is modified (N-acetylthreonine). T3 is modified (phosphothreonine). Transmembrane regions (helical) follow at residues 57 to 81 (LFEV…PHLA), 122 to 143 (LLGP…KDRN), 166 to 188 (KALY…RKIT), 243 to 263 (KPFA…LSYS), and 279 to 300 (WFNN…ASQA). E355 provides a ligand contact to [CaMn4O5] cluster. A helical membrane pass occupies residues 435–459 (RARAAAAGFEKGIDRDLEPVLFMTP).

The protein belongs to the PsbB/PsbC family. PsbC subfamily. In terms of assembly, PSII is composed of 1 copy each of membrane proteins PsbA, PsbB, PsbC, PsbD, PsbE, PsbF, PsbH, PsbI, PsbJ, PsbK, PsbL, PsbM, PsbT, PsbX, PsbY, PsbZ, Psb30/Ycf12, at least 3 peripheral proteins of the oxygen-evolving complex and a large number of cofactors. It forms dimeric complexes. Binds multiple chlorophylls and provides some of the ligands for the Ca-4Mn-5O cluster of the oxygen-evolving complex. It may also provide a ligand for a Cl- that is required for oxygen evolution. PSII binds additional chlorophylls, carotenoids and specific lipids. serves as cofactor.

It is found in the plastid. The protein localises to the chloroplast thylakoid membrane. Its function is as follows. One of the components of the core complex of photosystem II (PSII). It binds chlorophyll and helps catalyze the primary light-induced photochemical processes of PSII. PSII is a light-driven water:plastoquinone oxidoreductase, using light energy to abstract electrons from H(2)O, generating O(2) and a proton gradient subsequently used for ATP formation. In Nandina domestica (Heavenly bamboo), this protein is Photosystem II CP43 reaction center protein.